Here is a 105-residue protein sequence, read N- to C-terminus: MKYAIVEISGRQFWIETGKYYDLNRIPTELEKEIILNRVLLANNDGEILIGKPYLDSVKVKGKILEHLRGRKTIVYKMRPKKKTRKKQGHRQDLTRVLIEEIKIN.

It belongs to the bacterial ribosomal protein bL21 family. As to quaternary structure, part of the 50S ribosomal subunit.

The protein resides in the plastid. It is found in the chloroplast. Functionally, this protein binds to 23S rRNA. The protein is Large ribosomal subunit protein bL21c of Thalassiosira pseudonana (Marine diatom).